The primary structure comprises 232 residues: Large ribosomal subunit protein uL1 (232 aa).

Belongs to the universal ribosomal protein uL1 family. As to quaternary structure, part of the 50S ribosomal subunit.

In terms of biological role, binds directly to 23S rRNA. The L1 stalk is quite mobile in the ribosome, and is involved in E site tRNA release. Protein L1 is also a translational repressor protein, it controls the translation of the L11 operon by binding to its mRNA. This chain is Large ribosomal subunit protein uL1, found in Coxiella burnetii (strain CbuK_Q154) (Coxiella burnetii (strain Q154)).